The chain runs to 366 residues: Galactoside alpha-(1,2)-fucosyltransferase 1 (366 aa).

The Cytoplasmic portion of the chain corresponds to 1-8 (MWPLSHRH). A helical; Signal-anchor for type II membrane protein membrane pass occupies residues 9–25 (LCLAFLLVCVLSAISFF). Topologically, residues 26-366 (LHVHQDSFRH…LSPLWTLAEP (341 aa)) are lumenal. Residues Asn-66, Asn-302, and Asn-328 are each glycosylated (N-linked (GlcNAc...) asparagine).

This sequence belongs to the glycosyltransferase 11 family.

Its subcellular location is the golgi apparatus. It is found in the golgi stack membrane. The enzyme catalyses a beta-D-galactosyl-(1-&gt;4)-N-acetyl-beta-D-glucosaminyl derivative + GDP-beta-L-fucose = an alpha-L-Fuc-(1-&gt;2)-beta-D-Gal-(1-&gt;4)-beta-D-GlcNAc derivative + GDP + H(+). The catalysed reaction is a ganglioside GA1 + GDP-beta-L-fucose = a ganglioside Fuc-GA1 + GDP + H(+). It catalyses the reaction a beta-D-Gal-(1-&gt;3)-beta-D-GlcNAc-(1-&gt;3)-beta-D-Gal-(1-&gt;4)-beta-D-Glc-(1&lt;-&gt;1')-Cer(d18:1(4E)) + GDP-beta-L-fucose = alpha-L-fucosyl-(1-&gt;2)- beta-D-galactosyl-(1-&gt;3)-N-acetyl-beta-D-glucosaminyl-(1-&gt;3)-beta-D-galactosyl-(1-&gt;4)-beta-D-glucosyl-(1&lt;-&gt;1')-N-acylsphing-4-enine + GDP + H(+). It carries out the reaction a neolactoside nLc4Cer(d18:1(4E)) + GDP-beta-L-fucose = a neolactoside IV(2)-alpha-Fuc-nLc4Cer(d18:1(4E)) + GDP + H(+). The enzyme catalyses a ganglioside GM1 + GDP-beta-L-fucose = a ganglioside Fuc-GM1 + GDP + H(+). The catalysed reaction is beta-D-galactosyl-(1-&gt;3)-N-acetyl-D-galactosamine + GDP-beta-L-fucose = alpha-L-fucosyl-(1-&gt;2)-beta-D-galactosyl-(1-&gt;3)-N-acetyl-D-galactosamine + GDP + H(+). Its pathway is protein modification; protein glycosylation. Catalyzes the transfer of L-fucose, from a guanosine diphosphate-beta-L-fucose, to the terminal galactose residue of glycoconjugates through an alpha(1,2) linkage leading to H antigen synthesis that is an intermediate substrate in the synthesis of ABO blood group antigens. H antigen is essential for maturation of the glomerular layer of the main olfactory bulb, in cell migration and early cell-cell contacts during tumor associated angiogenesis. Preferentially fucosylates soluble lactose and to a lesser extent fucosylates glycolipids gangliosides GA1 and GM1a. This Alouatta caraya (Black howler monkey) protein is Galactoside alpha-(1,2)-fucosyltransferase 1.